Reading from the N-terminus, the 1114-residue chain is Kinesin-like protein KIN-12B (1114 aa).

Positions 1-119 (MRSLFSSKLS…GGGGGDSGVQ (119 aa)) are disordered. The segment covering 98 to 107 (SAASPAPEGA) has biased composition (low complexity). A Kinesin motor domain is found at 117-459 (GVQVVVRVRP…LRFAHRAKDI (343 aa)). 197-204 (GQTGSGKT) serves as a coordination point for ATP. Coiled-coil stretches lie at residues 772 to 810 (VLSA…KNQL) and 999 to 1043 (ELLV…DQEV). Residues 1055–1065 (LPSNVVQSPEP) are compositionally biased toward polar residues. The segment at 1055 to 1081 (LPSNVVQSPEPSETGPARYDTGGSFGD) is disordered.

The protein belongs to the TRAFAC class myosin-kinesin ATPase superfamily. Kinesin family. KIN-12 subfamily.

This is Kinesin-like protein KIN-12B from Oryza sativa subsp. japonica (Rice).